Consider the following 91-residue polypeptide: Large ribosomal subunit protein uL23 (91 aa).

It belongs to the universal ribosomal protein uL23 family. As to quaternary structure, part of the 50S ribosomal subunit. Contacts protein L29.

In terms of biological role, binds to 23S rRNA. One of the proteins that surrounds the polypeptide exit tunnel on the outside of the ribosome. This Staphylothermus marinus (strain ATCC 43588 / DSM 3639 / JCM 9404 / F1) protein is Large ribosomal subunit protein uL23.